Here is an 86-residue protein sequence, read N- to C-terminus: Small ribosomal subunit protein bS20 (86 aa).

Residues 1-26 are disordered; it reads MANIKSAKKRAITSEKRRQHNASRRS.

Belongs to the bacterial ribosomal protein bS20 family.

Its function is as follows. Binds directly to 16S ribosomal RNA. The sequence is that of Small ribosomal subunit protein bS20 from Photobacterium profundum (strain SS9).